The following is a 151-amino-acid chain: Ribosome maturation factor RimP (151 aa).

Belongs to the RimP family.

It is found in the cytoplasm. In terms of biological role, required for maturation of 30S ribosomal subunits. This Shewanella baltica (strain OS223) protein is Ribosome maturation factor RimP.